The following is a 92-amino-acid chain: Large ribosomal subunit protein bL27 (92 aa).

Residues Met1–Phe9 constitute a propeptide that is removed on maturation. The interval Gly14 to Ala34 is disordered.

Belongs to the bacterial ribosomal protein bL27 family. In terms of processing, the N-terminus is cleaved by ribosomal processing cysteine protease Prp.

The chain is Large ribosomal subunit protein bL27 from Exiguobacterium sibiricum (strain DSM 17290 / CCUG 55495 / CIP 109462 / JCM 13490 / 255-15).